Reading from the N-terminus, the 210-residue chain is Putative methyltransferase ECU09_1500 (210 aa).

Belongs to the methyltransferase superfamily.

This is Putative methyltransferase ECU09_1500 from Encephalitozoon cuniculi (strain GB-M1) (Microsporidian parasite).